We begin with the raw amino-acid sequence, 115 residues long: Probable non-functional T cell receptor beta variable 23-1 (115 aa).

Residues 1 to 21 (MGTRLLGCAALCLLAADSFHA) form the signal peptide. The region spanning 22–115 (KVTQTPGHLV…TALYLCASSQ (94 aa)) is the Ig-like domain. A disulfide bond links Cys42 and Cys111.

As to quaternary structure, alpha-beta TR is a heterodimer composed of an alpha and beta chain; disulfide-linked. The alpha-beta TR is associated with the transmembrane signaling CD3 coreceptor proteins to form the TR-CD3 (TcR or TCR). The assembly of alpha-beta TR heterodimers with CD3 occurs in the endoplasmic reticulum where a single alpha-beta TR heterodimer associates with one CD3D-CD3E heterodimer, one CD3G-CD3E heterodimer and one CD247 homodimer forming a stable octameric structure. CD3D-CD3E and CD3G-CD3E heterodimers preferentially associate with TR alpha and TR beta chains, respectively. The association of the CD247 homodimer is the last step of TcR assembly in the endoplasmic reticulum and is required for transport to the cell surface.

The protein resides in the cell membrane. Functionally, probable non-functional open reading frame (ORF) of V region of the variable domain of T cell receptor (TR) beta chain. Non-functional ORF generally cannot participate in the synthesis of a productive T cell receptor (TR) chain due to altered V-(D)-J or switch recombination and/or splicing site (at mRNA level) and/or conserved amino acid change (protein level). Alpha-beta T cell receptors are antigen specific receptors which are essential to the immune response and are present on the cell surface of T lymphocytes. Recognize peptide-major histocompatibility (MH) (pMH) complexes that are displayed by antigen presenting cells (APC), a prerequisite for efficient T cell adaptive immunity against pathogens. Binding of alpha-beta TR to pMH complex initiates TR-CD3 clustering on the cell surface and intracellular activation of LCK that phosphorylates the ITAM motifs of CD3G, CD3D, CD3E and CD247 enabling the recruitment of ZAP70. In turn ZAP70 phosphorylates LAT, which recruits numerous signaling molecules to form the LAT signalosome. The LAT signalosome propagates signal branching to three major signaling pathways, the calcium, the mitogen-activated protein kinase (MAPK) kinase and the nuclear factor NF-kappa-B (NF-kB) pathways, leading to the mobilization of transcription factors that are critical for gene expression and essential for T cell growth and differentiation. The T cell repertoire is generated in the thymus, by V-(D)-J rearrangement. This repertoire is then shaped by intrathymic selection events to generate a peripheral T cell pool of self-MH restricted, non-autoaggressive T cells. Post-thymic interaction of alpha-beta TR with the pMH complexes shapes TR structural and functional avidity. This Homo sapiens (Human) protein is Probable non-functional T cell receptor beta variable 23-1.